Reading from the N-terminus, the 125-residue chain is Holo-[acyl-carrier-protein] synthase (125 aa).

The Mg(2+) site is built by D8 and E57.

The protein belongs to the P-Pant transferase superfamily. AcpS family. It depends on Mg(2+) as a cofactor.

The protein localises to the cytoplasm. It carries out the reaction apo-[ACP] + CoA = holo-[ACP] + adenosine 3',5'-bisphosphate + H(+). Functionally, transfers the 4'-phosphopantetheine moiety from coenzyme A to a Ser of acyl-carrier-protein. The polypeptide is Holo-[acyl-carrier-protein] synthase (Neisseria meningitidis serogroup A / serotype 4A (strain DSM 15465 / Z2491)).